The chain runs to 89 residues: Small ribosomal subunit protein uS15 (89 aa).

Basic and acidic residues predominate over residues 1 to 11; sequence MSITAERKAEV. The segment at 1–25 is disordered; it reads MSITAERKAEVIKTNARKSGDTGSP.

The protein belongs to the universal ribosomal protein uS15 family. In terms of assembly, part of the 30S ribosomal subunit. Forms a bridge to the 50S subunit in the 70S ribosome, contacting the 23S rRNA.

Functionally, one of the primary rRNA binding proteins, it binds directly to 16S rRNA where it helps nucleate assembly of the platform of the 30S subunit by binding and bridging several RNA helices of the 16S rRNA. Its function is as follows. Forms an intersubunit bridge (bridge B4) with the 23S rRNA of the 50S subunit in the ribosome. In Nitrobacter hamburgensis (strain DSM 10229 / NCIMB 13809 / X14), this protein is Small ribosomal subunit protein uS15.